The primary structure comprises 354 residues: Glutamine synthetase (354 aa).

A GS beta-grasp domain is found at 22 to 101; the sequence is VQAEYVWIDG…VLAETFNNDG (80 aa). Residues 108-354 enclose the GS catalytic domain; the sequence is HRHHTKKVMD…IIVETTVLDK (247 aa).

The protein belongs to the glutamine synthetase family. In terms of assembly, homooctamer.

Its subcellular location is the cytoplasm. It catalyses the reaction L-glutamate + NH4(+) + ATP = L-glutamine + ADP + phosphate + H(+). The protein is Glutamine synthetase (GLNA) of Suillus bovinus (Jersey cow bolete).